Here is a 488-residue protein sequence, read N- to C-terminus: Glutamyl-tRNA(Gln) amidotransferase subunit A (488 aa).

Active-site charge relay system residues include Lys79 and Ser159. Residue Ser183 is the Acyl-ester intermediate of the active site.

The protein belongs to the amidase family. GatA subfamily. As to quaternary structure, heterotrimer of A, B and C subunits.

The enzyme catalyses L-glutamyl-tRNA(Gln) + L-glutamine + ATP + H2O = L-glutaminyl-tRNA(Gln) + L-glutamate + ADP + phosphate + H(+). Its function is as follows. Allows the formation of correctly charged Gln-tRNA(Gln) through the transamidation of misacylated Glu-tRNA(Gln) in organisms which lack glutaminyl-tRNA synthetase. The reaction takes place in the presence of glutamine and ATP through an activated gamma-phospho-Glu-tRNA(Gln). This is Glutamyl-tRNA(Gln) amidotransferase subunit A from Wolbachia pipientis subsp. Culex pipiens (strain wPip).